The following is a 526-amino-acid chain: Amine oxidase [flavin-containing] A (526 aa).

Position 1 is an N-acetylmethionine (Met-1). Topologically, residues 1 to 497 (MTDLEKPNLA…HTFLERNLPS (497 aa)) are cytoplasmic. Ser-383 is modified (phosphoserine). S-8alpha-FAD cysteine is present on Cys-406. A helical; Anchor for type IV membrane protein membrane pass occupies residues 498-518 (VPGLLKITGVSTSVALLCFVL). The Mitochondrial intermembrane segment spans residues 519–526 (YKIKKLPC). The tract at residues 520 to 522 (KIK) is interaction with membrane phospholipid headgroups.

It belongs to the flavin monoamine oxidase family. In terms of assembly, monomer, homo- or heterodimer (containing two subunits of similar size). Each subunit contains a covalently bound flavin. Enzymatically active as monomer. FAD is required as a cofactor.

Its subcellular location is the mitochondrion outer membrane. It catalyses the reaction a secondary aliphatic amine + O2 + H2O = a primary amine + an aldehyde + H2O2. It carries out the reaction a primary methyl amine + O2 + H2O = an aldehyde + H2O2 + NH4(+). The enzyme catalyses (R)-adrenaline + O2 + H2O = (R)-3,4-dihydroxymandelaldehyde + methylamine + H2O2. The catalysed reaction is dopamine + O2 + H2O = 3,4-dihydroxyphenylacetaldehyde + H2O2 + NH4(+). It catalyses the reaction tyramine + O2 + H2O = (4-hydroxyphenyl)acetaldehyde + H2O2 + NH4(+). It carries out the reaction (R)-noradrenaline + O2 + H2O = (R)-3,4-dihydroxymandelaldehyde + H2O2 + NH4(+). The enzyme catalyses serotonin + O2 + H2O = (5-hydroxyindol-3-yl)acetaldehyde + H2O2 + NH4(+). The catalysed reaction is kynuramine + O2 + H2O = 3-(2-aminophenyl)-3-oxopropanal + H2O2 + NH4(+). It catalyses the reaction tryptamine + O2 + H2O = indole-3-acetaldehyde + H2O2 + NH4(+). It carries out the reaction 2-phenylethylamine + O2 + H2O = 2-phenylacetaldehyde + H2O2 + NH4(+). Functionally, catalyzes the oxidative deamination of primary and some secondary amine such as neurotransmitters, with concomitant reduction of oxygen to hydrogen peroxide and has important functions in the metabolism of neuroactive and vasoactive amines in the central nervous system and peripheral tissues. Preferentially oxidizes serotonin. Also catalyzes the oxidative deamination of kynuramine to 3-(2-aminophenyl)-3-oxopropanal that can spontaneously condense to 4-hydroxyquinoline. The polypeptide is Amine oxidase [flavin-containing] A (Rattus norvegicus (Rat)).